Consider the following 481-residue polypeptide: Glutamate--glyoxylate aminotransferase 2 (481 aa).

The residue at position 291 (lysine 291) is an N6-(pyridoxal phosphate)lysine. Positions 479–481 (SRM) match the Peroxisomal targeting signal motif.

This sequence belongs to the class-I pyridoxal-phosphate-dependent aminotransferase family. Alanine aminotransferase subfamily. Homodimer. Pyridoxal 5'-phosphate is required as a cofactor. Post-translationally, the N-terminus is blocked. In terms of tissue distribution, expressed at low levels in seedlings, leaves, flowers, roots, and green siliques.

Its subcellular location is the peroxisome. It catalyses the reaction L-alanine + 2-oxoglutarate = pyruvate + L-glutamate. It carries out the reaction glyoxylate + L-alanine = glycine + pyruvate. The enzyme catalyses glycine + 2-oxoglutarate = glyoxylate + L-glutamate. Its pathway is photosynthesis; C4 acid pathway. The protein operates within amino-acid degradation; L-alanine degradation via transaminase pathway; pyruvate from L-alanine: step 1/1. Catalyzes the Glu:glyoxylate aminotransferase (GGT), Ala:glyoxylate aminotransferase (AGT), Ala:2-oxoglutarate aminotransferase (AKT) and Glu:pyruvate aminotransferase (GPT) reactions in peroxisomes. This chain is Glutamate--glyoxylate aminotransferase 2 (GGAT2), found in Arabidopsis thaliana (Mouse-ear cress).